We begin with the raw amino-acid sequence, 122 residues long: uncharacterized protein (122 aa).

This is an uncharacterized protein from Schizosaccharomyces pombe (strain 972 / ATCC 24843) (Fission yeast).